A 208-amino-acid polypeptide reads, in one-letter code: Ribosomal RNA small subunit methyltransferase G (208 aa).

S-adenosyl-L-methionine is bound by residues G78, F83, 101-103 (ERS), 129-130 (IE), and R142.

It belongs to the methyltransferase superfamily. RNA methyltransferase RsmG family.

It localises to the cytoplasm. Its function is as follows. Specifically methylates the N7 position of a guanine in 16S rRNA. The chain is Ribosomal RNA small subunit methyltransferase G from Borrelia garinii subsp. bavariensis (strain ATCC BAA-2496 / DSM 23469 / PBi) (Borreliella bavariensis).